The chain runs to 475 residues: Sulfate adenylyltransferase subunit 1 (475 aa).

The tr-type G domain maps to 25–241; it reads KSLLRFLTCG…LENIEIQRVV (217 aa). A G1 region spans residues 34–41; sequence GSVDDGKS. 34–41 provides a ligand contact to GTP; it reads GSVDDGKS. The G2 stretch occupies residues 92-96; the sequence is GITID. Residues 113-116 form a G3 region; sequence DTPG. GTP contacts are provided by residues 113–117 and 168–171; these read DTPGH and NKMD. Positions 168-171 are G4; the sequence is NKMD. Positions 206–208 are G5; the sequence is SAL.

This sequence belongs to the TRAFAC class translation factor GTPase superfamily. Classic translation factor GTPase family. CysN/NodQ subfamily. In terms of assembly, heterodimer composed of CysD, the smaller subunit, and CysN.

It carries out the reaction sulfate + ATP + H(+) = adenosine 5'-phosphosulfate + diphosphate. It functions in the pathway sulfur metabolism; hydrogen sulfide biosynthesis; sulfite from sulfate: step 1/3. Its function is as follows. With CysD forms the ATP sulfurylase (ATPS) that catalyzes the adenylation of sulfate producing adenosine 5'-phosphosulfate (APS) and diphosphate, the first enzymatic step in sulfur assimilation pathway. APS synthesis involves the formation of a high-energy phosphoric-sulfuric acid anhydride bond driven by GTP hydrolysis by CysN coupled to ATP hydrolysis by CysD. In Cronobacter sakazakii (strain ATCC BAA-894) (Enterobacter sakazakii), this protein is Sulfate adenylyltransferase subunit 1.